The chain runs to 78 residues: Translational regulator CsrA (78 aa).

This sequence belongs to the CsrA/RsmA family. As to quaternary structure, homodimer; the beta-strands of each monomer intercalate to form a hydrophobic core, while the alpha-helices form wings that extend away from the core.

The protein localises to the cytoplasm. Functionally, a translational regulator that binds mRNA to regulate translation initiation and/or mRNA stability. Usually binds in the 5'-UTR at or near the Shine-Dalgarno sequence preventing ribosome-binding, thus repressing translation. Its main target seems to be the major flagellin gene, while its function is anatagonized by FliW. The protein is Translational regulator CsrA of Desulfovibrio desulfuricans (strain ATCC 27774 / DSM 6949 / MB).